Reading from the N-terminus, the 325-residue chain is E3 ubiquitin-protein ligase SIAH2 (325 aa).

A compositionally biased stretch (polar residues) spans 1-15 (MSRPSSTGPSANKPC). Positions 1–43 (MSRPSSTGPSANKPCSKQPPPPQTPHAPSPAAPPAAATISAAG) are disordered. The residue at position 6 (Ser-6) is a Phosphoserine. Ser-16 bears the Phosphoserine; by DYRK2 mark. A compositionally biased stretch (pro residues) spans 17–33 (KQPPPPQTPHAPSPAAP). Thr-24 is subject to Phosphothreonine; by MAPK14. The residue at position 29 (Ser-29) is a Phosphoserine; by DYRK2 and MAPK14. Over residues 34 to 43 (PAAATISAAG) the composition is skewed to low complexity. A Phosphoserine; by DYRK2 modification is found at Ser-69. The RING-type zinc finger occupies 81 to 116 (CPVCFDYVLPPILQCQAGHLVCNQCRQKLSCCPTCR). Thr-120 is modified (phosphothreonine; by DYRK2). Residues 131 to 323 (VASAVLFPCK…LGINVTISTC (193 aa)) are SBD. Residues 134–194 (AVLFPCKYAT…VMSHLMHAHK (61 aa)) form an SIAH-type zinc finger. Zn(2+) is bound by residues Cys-139, Cys-146, His-158, Cys-162, Cys-169, Cys-176, His-188, and His-193.

It belongs to the SINA (Seven in absentia) family. Homodimer. Interacts with VAV1, without mediating its ubiquitin-mediated degradation. Probable component of some large E3 complex possibly composed of UBE2D1, SIAH2, CACYBP/SIP, SKP1, APC and TBL1X. Interacts with UBE2I. Interacts with UBE2E2. Interacts with PEG10, which may inhibit its activity. Interacts with PEG3 and EGLN2. Interacts with DYRK2. Interacts with SNCAIP. Interacts with NR1D1 and NR1D2. Interacts with DCC. Interacts with AXIN1. Post-translationally, phosphorylated at Thr-24 and Ser-29 by MAPK14, which mediates the degradation by the proteasome of EGLN3. Phosphorylated at Ser-29 by DYRK2; this increases the ubiquitin ligase activity and promotes degradation of EGLN3. As to expression, detected in brain (at protein level).

The protein localises to the cytoplasm. Its subcellular location is the nucleus. It carries out the reaction S-ubiquitinyl-[E2 ubiquitin-conjugating enzyme]-L-cysteine + [acceptor protein]-L-lysine = [E2 ubiquitin-conjugating enzyme]-L-cysteine + N(6)-ubiquitinyl-[acceptor protein]-L-lysine.. It participates in protein modification; protein ubiquitination. Its function is as follows. E3 ubiquitin-protein ligase that mediates ubiquitination and subsequent proteasomal degradation of target proteins. E3 ubiquitin ligases accept ubiquitin from an E2 ubiquitin-conjugating enzyme in the form of a thioester and then directly transfers the ubiquitin to targeted substrates. Mediates E3 ubiquitin ligase activity either through direct binding to substrates or by functioning as the essential RING domain subunit of larger E3 complexes. Mediates ubiquitination and proteasomal degradation of DYRK2 in response to hypoxia. Promotes monoubiquitination of SNCA. Triggers the ubiquitin-mediated degradation of many substrates, including proteins involved in transcription regulation (GPS2, POU2AF1, PML, NCOR1), a cell surface receptor (DCC), an antiapoptotic protein (BAG1), and a protein involved in synaptic vesicle function in neurons (SYP). It is thereby involved in apoptosis, tumor suppression, cell cycle, transcription and signaling processes. Has some overlapping function with SIAH1. Triggers the ubiquitin-mediated degradation of TRAF2, whereas SIAH1 does not. Regulates cellular clock function via ubiquitination of circadian transcriptional repressors NR1D1 and NR1D2 leading to their proteasomal degradation. Plays an important role in mediating the rhythmic degradation/clearance of NR1D1 and NR1D2 contributing to their circadian profile of protein abundance. Mediates ubiquitination and degradation of EGLN2 and EGLN3 in response to the unfolded protein response (UPR), leading to their degradation and subsequent stabilization of ATF4. Also part of the Wnt signaling pathway in which it mediates the Wnt-induced ubiquitin-mediated proteasomal degradation of AXIN1. The chain is E3 ubiquitin-protein ligase SIAH2 (Siah2) from Rattus norvegicus (Rat).